Here is a 320-residue protein sequence, read N- to C-terminus: ADP/ATP translocase 4 (320 aa).

Topologically, residues 1-20 (MSNESSKKQSSKKALFDPVS) are mitochondrial intermembrane. Residues 19–111 (VSFSKDLLAG…FAFKDKYKEL (93 aa)) form a Solcar 1 repeat. The helical transmembrane segment at 21–50 (FSKDLLAGGVAAAVSKTAVAPIERVKLLLQ) threads the bilayer. At 51-87 (VQASSKQISPEARYKGMLDCLVRIPREQGFLSYWRGN) the chain is on the mitochondrial matrix side. A helical membrane pass occupies residues 88–112 (LANVIRYFPTQALNFAFKDKYKELF). ADP-binding residues include Arg93 and Lys105. Topologically, residues 113 to 122 (MSGVNKEKQF) are mitochondrial intermembrane. The helical transmembrane segment at 123 to 143 (WRWFLANLASGGAAGATSLCV) threads the bilayer. 2 Solcar repeats span residues 124–214 (RWFL…VKGL) and 221–308 (TPFL…IKEF). Topologically, residues 144-191 (VYPLDFARTRLGVDIGKGPEQRQFTGLGDCIMKIAKSDGLIGLYQGFG) are mitochondrial matrix. The chain crosses the membrane as a helical span at residues 192–212 (VSVQGIIVYRASYFGAYDTVK). Over 213–223 (GLLPKPKETPF) the chain is Mitochondrial intermembrane. A helical transmembrane segment spans residues 224 to 244 (LVSFIIAQIVTTCSGILSYPF). Residues 245–284 (DTVRRRMMMQSGESDRQYKGTIDCFLKIYRHEGVPAFFRG) lie on the Mitochondrial matrix side of the membrane. Arg248 contacts ADP. The interval 248 to 253 (RRRMMM) is important for transport activity. The Nucleotide carrier signature motif signature appears at 248-253 (RRRMMM). A helical transmembrane segment spans residues 285 to 302 (AFSNILRGTGGALVLVLY). Residues 303–320 (DKIKEFLNIDVGGSSSGD) are Mitochondrial intermembrane-facing.

This sequence belongs to the mitochondrial carrier (TC 2.A.29) family. In terms of assembly, monomer. Specifically expressed in undifferentiated embryonic stem cells and germ cells. Expression is down-regulated after embryonic stem cells differentiation. In adults, only expressed in developing gametes in testis. In testis, expressed at higher level in spermatocytes. Expression is probably associated with entry of the male germ cells into meiosis. Expressed at very low level in Sertoli cells.

The protein localises to the mitochondrion inner membrane. It localises to the membrane. Its subcellular location is the cell projection. The protein resides in the cilium. It is found in the flagellum membrane. It catalyses the reaction ADP(in) + ATP(out) = ADP(out) + ATP(in). It carries out the reaction dATP(out) + ADP(in) = dATP(in) + ADP(out). The catalysed reaction is dADP(in) + ADP(out) = dADP(out) + ADP(in). The enzyme catalyses H(+)(in) = H(+)(out). Its activity is regulated as follows. The matrix-open state (m-state) is inhibited by the membrane-permeable bongkrekic acid (BKA). The cytoplasmic-open state (c-state) is inhibited by the membrane-impermeable toxic inhibitor carboxyatractyloside (CATR). Proton transporter activity is inhibited by ADP:ATP antiporter activity. ADP:ATP antiporter that mediates import of ADP into the mitochondrial matrix for ATP synthesis, and export of ATP out to fuel the cell. Cycles between the cytoplasmic-open state (c-state) and the matrix-open state (m-state): operates by the alternating access mechanism with a single substrate-binding site intermittently exposed to either the cytosolic (c-state) or matrix (m-state) side of the inner mitochondrial membrane. Specifically required during spermatogenesis, probably to mediate ADP:ATP exchange in spermatocytes. Large ATP supplies from mitochondria may be critical for normal progression of spermatogenesis during early stages of meiotic prophase I, including DNA double-strand break repair and chromosomal synapsis. In addition to its ADP:ATP antiporter activity, also involved in mitochondrial uncoupling and mitochondrial permeability transition pore (mPTP) activity. Plays a role in mitochondrial uncoupling by acting as a proton transporter: proton transport uncouples the proton flows via the electron transport chain and ATP synthase to reduce the efficiency of ATP production and cause mitochondrial thermogenesis. Proton transporter activity is inhibited by ADP:ATP antiporter activity, suggesting that SLC25A31/ANT4 acts as a master regulator of mitochondrial energy output by maintaining a delicate balance between ATP production (ADP:ATP antiporter activity) and thermogenesis (proton transporter activity). Proton transporter activity requires free fatty acids as cofactor, but does not transport it. Among nucleotides, may also exchange ADP for dATP and dADP. Also plays a key role in mPTP opening, a non-specific pore that enables free passage of the mitochondrial membranes to solutes of up to 1.5 kDa, and which contributes to cell death. It is however unclear if SLC25A31/ANT4 constitutes a pore-forming component of mPTP or regulates it. This is ADP/ATP translocase 4 from Mus musculus (Mouse).